Here is a 670-residue protein sequence, read N- to C-terminus: Mannosyl-oligosaccharide alpha-1,2-mannosidase IA (670 aa).

Topologically, residues 1–30 are cytoplasmic; sequence MTGILPTYQRFVNGVPVPSISRRSFRLREK. Residues 31–51 form a helical; Signal-anchor for type II membrane protein membrane-spanning segment; that stretch reads YLIVSVLLTFGIVWLGALFYL. Residues 52–670 lie on the Lumenal side of the membrane; sequence PEFKSSNSVN…EPAHAQNNRI (619 aa). Asn61 carries an N-linked (GlcNAc...) asparagine glycan. The tract at residues 135 to 177 is disordered; that stretch reads DVAPSVSSSRGPSKPPVDAIEEPAVGNNAANKDVSPSGPKAES. A disulfide bridge links Cys480 with Cys512. Catalysis depends on Glu526, which acts as the Proton donor. Thr637 provides a ligand contact to Ca(2+).

This sequence belongs to the glycosyl hydrolase 47 family. Ca(2+) is required as a cofactor. In terms of processing, N-glycosylated. Contains high mannose-type oligosaccharides.

Its subcellular location is the golgi apparatus membrane. The enzyme catalyses N(4)-(alpha-D-Man-(1-&gt;2)-alpha-D-Man-(1-&gt;2)-alpha-D-Man-(1-&gt;3)-[alpha-D-Man-(1-&gt;2)-alpha-D-Man-(1-&gt;3)-[alpha-D-Man-(1-&gt;2)-alpha-D-Man-(1-&gt;6)]-alpha-D-Man-(1-&gt;6)]-beta-D-Man-(1-&gt;4)-beta-D-GlcNAc-(1-&gt;4)-beta-D-GlcNAc)-L-asparaginyl-[protein] (N-glucan mannose isomer 9A1,2,3B1,2,3) + 4 H2O = N(4)-(alpha-D-Man-(1-&gt;3)-[alpha-D-Man-(1-&gt;3)-[alpha-D-Man-(1-&gt;6)]-alpha-D-Man-(1-&gt;6)]-beta-D-Man-(1-&gt;4)-beta-D-GlcNAc-(1-&gt;4)-beta-D-GlcNAc)-L-asparaginyl-[protein] (N-glucan mannose isomer 5A1,2) + 4 beta-D-mannose. The catalysed reaction is N(4)-(alpha-D-Man-(1-&gt;2)-alpha-D-Man-(1-&gt;2)-alpha-D-Man-(1-&gt;3)-[alpha-D-Man-(1-&gt;3)-[alpha-D-Man-(1-&gt;2)-alpha-D-Man-(1-&gt;6)]-alpha-D-Man-(1-&gt;6)]-beta-D-Man-(1-&gt;4)-beta-D-GlcNAc-(1-&gt;4)-beta-D-GlcNAc)-L-asparaginyl-[protein] (N-glucan mannose isomer 8A1,2,3B1,3) + 3 H2O = N(4)-(alpha-D-Man-(1-&gt;3)-[alpha-D-Man-(1-&gt;3)-[alpha-D-Man-(1-&gt;6)]-alpha-D-Man-(1-&gt;6)]-beta-D-Man-(1-&gt;4)-beta-D-GlcNAc-(1-&gt;4)-beta-D-GlcNAc)-L-asparaginyl-[protein] (N-glucan mannose isomer 5A1,2) + 3 beta-D-mannose. The protein operates within protein modification; protein glycosylation. Strongly inhibited by 1-deoxymannojirimycin, an inhibitor of class I alpha-mannosidases, and by EDTA. EDTA inhibition is reversed by the addition of calcium, but not of magnesium. Functionally, involved in the maturation of Asn-linked oligosaccharides. Converts Man(9)GlcNAc(2) to Man(5)GlcNAc(2) primarily through the Man(7)GlcNAc(2) isomer C processing intermediate. This is Mannosyl-oligosaccharide alpha-1,2-mannosidase IA from Spodoptera frugiperda (Fall armyworm).